The following is a 120-amino-acid chain: Large ribosomal subunit protein bL12 (120 aa).

It belongs to the bacterial ribosomal protein bL12 family. In terms of assembly, homodimer. Part of the ribosomal stalk of the 50S ribosomal subunit. Forms a multimeric L10(L12)X complex, where L10 forms an elongated spine to which 2 to 4 L12 dimers bind in a sequential fashion. Binds GTP-bound translation factors.

Forms part of the ribosomal stalk which helps the ribosome interact with GTP-bound translation factors. Is thus essential for accurate translation. This chain is Large ribosomal subunit protein bL12, found in Listeria welshimeri serovar 6b (strain ATCC 35897 / DSM 20650 / CCUG 15529 / CIP 8149 / NCTC 11857 / SLCC 5334 / V8).